Reading from the N-terminus, the 88-residue chain is Large ribosomal subunit protein bL27 (88 aa).

Belongs to the bacterial ribosomal protein bL27 family.

The polypeptide is Large ribosomal subunit protein bL27 (Mycolicibacterium vanbaalenii (strain DSM 7251 / JCM 13017 / BCRC 16820 / KCTC 9966 / NRRL B-24157 / PYR-1) (Mycobacterium vanbaalenii)).